A 356-amino-acid polypeptide reads, in one-letter code: L-Ala-D/L-Glu epimerase (356 aa).

Substrate is bound at residue 161–163 (KVK). Positions 191, 219, and 244 each coordinate Mg(2+). Residues lysine 268 and 320–322 (DLD) each bind substrate.

Belongs to the mandelate racemase/muconate lactonizing enzyme family. It depends on Mg(2+) as a cofactor.

The enzyme catalyses L-alanyl-L-glutamate = L-alanyl-D-glutamate. In terms of biological role, dipeptide epimerase with a preference for substrates containing a Glu residue in the second position. Catalyzes the epimerization of L-Ala-L-Glu, L-Ser-L-Glu, L-Thr-L-Glu, L-Val-L-Glu, L-Gly-L-Glu and L-Thr-L-Glu (in vitro). May play a role in the metabolism of the murein peptide, of which L-Ala-D-Glu is a component. In Francisella tularensis subsp. novicida (strain U112), this protein is L-Ala-D/L-Glu epimerase.